The chain runs to 572 residues: Proline--tRNA ligase (572 aa).

The protein belongs to the class-II aminoacyl-tRNA synthetase family. ProS type 1 subfamily. As to quaternary structure, homodimer.

Its subcellular location is the cytoplasm. It carries out the reaction tRNA(Pro) + L-proline + ATP = L-prolyl-tRNA(Pro) + AMP + diphosphate. In terms of biological role, catalyzes the attachment of proline to tRNA(Pro) in a two-step reaction: proline is first activated by ATP to form Pro-AMP and then transferred to the acceptor end of tRNA(Pro). As ProRS can inadvertently accommodate and process non-cognate amino acids such as alanine and cysteine, to avoid such errors it has two additional distinct editing activities against alanine. One activity is designated as 'pretransfer' editing and involves the tRNA(Pro)-independent hydrolysis of activated Ala-AMP. The other activity is designated 'posttransfer' editing and involves deacylation of mischarged Ala-tRNA(Pro). The misacylated Cys-tRNA(Pro) is not edited by ProRS. This Pectobacterium atrosepticum (strain SCRI 1043 / ATCC BAA-672) (Erwinia carotovora subsp. atroseptica) protein is Proline--tRNA ligase.